The primary structure comprises 274 residues: Thiamine kinase (274 aa).

This sequence belongs to the thiamine kinase family.

It carries out the reaction thiamine + ATP = thiamine phosphate + ADP + H(+). The protein operates within cofactor biosynthesis; thiamine diphosphate biosynthesis; thiamine phosphate from thiamine: step 1/1. Functionally, catalyzes the ATP-dependent phosphorylation of thiamine to thiamine phosphate. Is involved in thiamine salvage. This Shigella sonnei (strain Ss046) protein is Thiamine kinase.